Here is a 215-residue protein sequence, read N- to C-terminus: Cytochrome b6 (215 aa).

The chain crosses the membrane as a helical span at residues 32 to 52 (IFYCLGGITLTCFLVQVASGF). Cys35 serves as a coordination point for heme c. 2 residues coordinate heme b: His86 and His100. Transmembrane regions (helical) follow at residues 90-110 (ASMM…TGGF), 116-136 (LTWV…VTGY), and 186-206 (LHTF…FLMI). Positions 187 and 202 each coordinate heme b.

Belongs to the cytochrome b family. PetB subfamily. In terms of assembly, the 4 large subunits of the cytochrome b6-f complex are cytochrome b6, subunit IV (17 kDa polypeptide, PetD), cytochrome f and the Rieske protein, while the 4 small subunits are PetG, PetL, PetM and PetN. The complex functions as a dimer. Heme b is required as a cofactor. The cofactor is heme c.

It localises to the plastid. It is found in the chloroplast thylakoid membrane. Component of the cytochrome b6-f complex, which mediates electron transfer between photosystem II (PSII) and photosystem I (PSI), cyclic electron flow around PSI, and state transitions. In Anthoceros angustus (Hornwort), this protein is Cytochrome b6.